The following is a 152-amino-acid chain: Ribosome maturation factor RimP (152 aa).

Belongs to the RimP family.

Its subcellular location is the cytoplasm. Required for maturation of 30S ribosomal subunits. The sequence is that of Ribosome maturation factor RimP from Idiomarina loihiensis (strain ATCC BAA-735 / DSM 15497 / L2-TR).